Here is a 426-residue protein sequence, read N- to C-terminus: Tetracenomycin polyketide synthase ketoacyl synthase alpha subunit (426 aa).

Residues 6-420 (EKRVVITGIG…GFQSAAVLAR (415 aa)) enclose the Ketosynthase family 3 (KS3) domain. Catalysis depends on for beta-ketoacyl synthase activity residues Cys173, His313, and His350.

Belongs to the thiolase-like superfamily. Beta-ketoacyl-ACP synthases family. As to quaternary structure, the tetracenomycin polyketide synthase (TCM PKS) is composed of a ketosynthase complex (TcmKL), an acyl carrier protein (TcmM), a cyclase (TcmN) and a probable second cyclase (TcmJ). TcmK and TcmL form a heterodimeric complex.

The enzyme catalyses 10 malonyl-CoA + 8 H(+) = tetracenomycin F2 + 10 CO2 + 10 CoA + 2 H2O. The protein operates within antibiotic biosynthesis; tetracenomycin C biosynthesis. In terms of biological role, involved in the biosynthesis of tetracenomycin C (TCM C). Part of a type II polyketide synthase (PKS) that catalyzes the synthesis of tetracenomycin F2 (TCM F2), a precursor of TCM C, from malonyl-CoA. TcmK and TcmL form a heterodimeric alpha-beta complex that catalyzes the condensation reactions between the growing acyl-enzyme chain and the malonyl-CoA extender units. In Streptomyces glaucescens, this protein is Tetracenomycin polyketide synthase ketoacyl synthase alpha subunit.